A 118-amino-acid polypeptide reads, in one-letter code: Large ribosomal subunit protein bL20 (118 aa).

It belongs to the bacterial ribosomal protein bL20 family.

In terms of biological role, binds directly to 23S ribosomal RNA and is necessary for the in vitro assembly process of the 50S ribosomal subunit. It is not involved in the protein synthesizing functions of that subunit. This Buchnera aphidicola subsp. Acyrthosiphon pisum (strain 5A) protein is Large ribosomal subunit protein bL20.